Reading from the N-terminus, the 283-residue chain is 4-hydroxy-tetrahydrodipicolinate reductase (283 aa).

Residues 15–20 and 116–118 each bind NAD(+); these read GALGRM and GTT. The active-site Proton donor/acceptor is the H172. Position 173 (H173) interacts with (S)-2,3,4,5-tetrahydrodipicolinate. The Proton donor role is filled by K176. A (S)-2,3,4,5-tetrahydrodipicolinate-binding site is contributed by 182–183; it reads GT.

Belongs to the DapB family.

Its subcellular location is the cytoplasm. The enzyme catalyses (S)-2,3,4,5-tetrahydrodipicolinate + NAD(+) + H2O = (2S,4S)-4-hydroxy-2,3,4,5-tetrahydrodipicolinate + NADH + H(+). It catalyses the reaction (S)-2,3,4,5-tetrahydrodipicolinate + NADP(+) + H2O = (2S,4S)-4-hydroxy-2,3,4,5-tetrahydrodipicolinate + NADPH + H(+). The protein operates within amino-acid biosynthesis; L-lysine biosynthesis via DAP pathway; (S)-tetrahydrodipicolinate from L-aspartate: step 4/4. Catalyzes the conversion of 4-hydroxy-tetrahydrodipicolinate (HTPA) to tetrahydrodipicolinate. In Prochlorococcus marinus (strain MIT 9313), this protein is 4-hydroxy-tetrahydrodipicolinate reductase.